The chain runs to 114 residues: Macrophage migration inhibitory factor homolog (114 aa).

Pro-2 acts as the Proton acceptor; via imino nitrogen in catalysis. Positions 33 and 98 each coordinate substrate.

This sequence belongs to the MIF family.

The protein resides in the secreted. It catalyses the reaction L-dopachrome = 5,6-dihydroxyindole-2-carboxylate. The enzyme catalyses 3-phenylpyruvate = enol-phenylpyruvate. Its function is as follows. Tautomerization of the methyl ester of L-dopachrome. Inhibits migration of human peripheral blood mononuclear cells. This is Macrophage migration inhibitory factor homolog from Trichuris trichiura (Whipworm).